The chain runs to 132 residues: Small ribosomal subunit protein uS8 (132 aa).

It belongs to the universal ribosomal protein uS8 family. As to quaternary structure, part of the 30S ribosomal subunit. Contacts proteins S5 and S12.

Functionally, one of the primary rRNA binding proteins, it binds directly to 16S rRNA central domain where it helps coordinate assembly of the platform of the 30S subunit. This Granulibacter bethesdensis (strain ATCC BAA-1260 / CGDNIH1) protein is Small ribosomal subunit protein uS8.